Consider the following 424-residue polypeptide: MKQFIVFILSLYTTLSWAVLEVTIFKQEENTFPIVISDFFVVGDASQGKVIADIMRNNFNRSGEFSVVNANYIIRSKPSFDKWKAKKIEAIVLGKLEKISKKIFNVEIELLDVYSKKTLYKDIFTVHNSGIRRIAHYLSDQIYHALLGKRGFFNTRLAYITVINKDKGEREYRLEISDSDAQNPQTILKSREPLLSPVWSPKQDKIAYVSFKNSRSEVFIQYPFIRRKIQKLPYFDGIASSPSWHPNGEILLLTLSKNGNKDIYSYQLSSKKLTRLTIDMGIDTEASYSPDGNKIIFTSNRSGQVQVYIKDLKTNKINRATFKGRYNAQAVFSPDGKSLIMVHKIDQDYRIALLDIATKDLKVMTNNQLDESPFFSPNGDMIIFATNQGGFGVLSVVSIWGRQIFELTSKVGEVREPNWSHYLK.

The signal sequence occupies residues 1–20 (MKQFIVFILSLYTTLSWAVL).

It belongs to the TolB family. The Tol-Pal system is composed of five core proteins: the inner membrane proteins TolA, TolQ and TolR, the periplasmic protein TolB and the outer membrane protein Pal. They form a network linking the inner and outer membranes and the peptidoglycan layer.

It localises to the periplasm. Functionally, part of the Tol-Pal system, which plays a role in outer membrane invagination during cell division and is important for maintaining outer membrane integrity. The protein is Tol-Pal system protein TolB of Vesicomyosocius okutanii subsp. Calyptogena okutanii (strain HA).